Here is an 88-residue protein sequence, read N- to C-terminus: Large ribosomal subunit protein bL27 (88 aa).

The tract at residues 1–22 (MAQKKAGGSSRNGRDSAGRRLG) is disordered.

Belongs to the bacterial ribosomal protein bL27 family.

This is Large ribosomal subunit protein bL27 from Gluconobacter oxydans (strain 621H) (Gluconobacter suboxydans).